Here is a 518-residue protein sequence, read N- to C-terminus: Cytochrome P450 monooxygenase COX1 (518 aa).

A helical transmembrane segment spans residues 7–25; the sequence is VLIALSSIVVAYFVKTALA. 5 N-linked (GlcNAc...) asparagine glycosylation sites follow: asparagine 48, asparagine 100, asparagine 292, asparagine 302, and asparagine 351. Cysteine 450 contributes to the heme binding site. N-linked (GlcNAc...) asparagine glycosylation is present at asparagine 457.

The protein belongs to the cytochrome P450 family. Heme serves as cofactor.

The protein localises to the membrane. The protein operates within secondary metabolite biosynthesis. Functionally, cytochrome P450 monooxygenase; part of the gene cluster that mediates the biosynthesis of alpha-cuprenene and oxidized derivatives. The alpha-cuprenene synthase COP6 is the only sesquiterpene synthase identified in C.cinereus that appears to be part of a biosynthetic gene cluster and is highly specific since it catalyzes the cyclization of (2E,6E)-farnesyl diphosphate into only one product, alpha-cuprenene. The cytochrome P450 monooxygenase COX2 then oxidizes the cyclohexadiene ring of alpha-cuprenene at positions 1 and 4, yielding first alpha-cuparene, followed by alpha-cuparophenol and a further yet unidentified compound resulting from one additional oxidation step. The cytochrome P450 monooxygenase COX1 then likely catalyzes the oxidation at position 9 of the pentane ring of alpha-cuprenene to give the corresponding hydroxy or ketone derivatives. This chain is Cytochrome P450 monooxygenase COX1, found in Coprinopsis cinerea (strain Okayama-7 / 130 / ATCC MYA-4618 / FGSC 9003) (Inky cap fungus).